Reading from the N-terminus, the 227-residue chain is Protein PhlB (227 aa).

The signal sequence occupies residues 1-35 (MPEGRRLRRALAIALLALVAVTGLLMMAKEQQMGQ). 4 ANK repeats span residues 75–104 (RQVT…DPAA), 108–137 (DGNS…QMNV), 142–171 (TGAT…DTTL), and 175–204 (LGDT…MPGR).

Functionally, cell-protective protein that neutralizes the intracellular lysis capacity of phospholipase A1 through a direct interaction with the enzyme. This Serratia liquefaciens protein is Protein PhlB (phlB).